The chain runs to 163 residues: 16S rRNA aminocarboxypropyltransferase (163 aa).

S-adenosyl-L-methionine-binding residues include threonine 18, isoleucine 66, leucine 87, and serine 106.

It belongs to the TDD superfamily. TSR3 family.

It is found in the cytoplasm. It carries out the reaction an N(1)-methylpseudouridine in rRNA + S-adenosyl-L-methionine = N(1)-methyl-N(3)-[(3S)-3-amino-3-carboxypropyl]pseudouridine in rRNA + S-methyl-5'-thioadenosine + H(+). Its function is as follows. Aminocarboxypropyltransferase that catalyzes the aminocarboxypropyl transfer on pseudouridine corresponding to position 914 in M.jannaschii 16S rRNA. It constitutes the last step in biosynthesis of the hypermodified N1-methyl-N3-(3-amino-3-carboxypropyl) pseudouridine (m1acp3-Psi). The polypeptide is 16S rRNA aminocarboxypropyltransferase (Thermoplasma acidophilum (strain ATCC 25905 / DSM 1728 / JCM 9062 / NBRC 15155 / AMRC-C165)).